The chain runs to 200 residues: Holliday junction branch migration complex subunit RuvA (200 aa).

A domain I region spans residues 1 to 63 (MIGKLSGKID…EEHIHLYGFL (63 aa)). The tract at residues 64 to 142 (TLEEKNFFNL…KIFSSSAIIK (79 aa)) is domain II. Residues 142 to 146 (KDSSN) form a flexible linker region. Residues 147-200 (ISSVEINEVIKALVNLGFTRFEAQNTVQGIITQNTKISIDELIKTALKNRNSSF) form a domain III region.

Belongs to the RuvA family. As to quaternary structure, homotetramer. Forms an RuvA(8)-RuvB(12)-Holliday junction (HJ) complex. HJ DNA is sandwiched between 2 RuvA tetramers; dsDNA enters through RuvA and exits via RuvB. An RuvB hexamer assembles on each DNA strand where it exits the tetramer. Each RuvB hexamer is contacted by two RuvA subunits (via domain III) on 2 adjacent RuvB subunits; this complex drives branch migration. In the full resolvosome a probable DNA-RuvA(4)-RuvB(12)-RuvC(2) complex forms which resolves the HJ.

The protein localises to the cytoplasm. Its function is as follows. The RuvA-RuvB-RuvC complex processes Holliday junction (HJ) DNA during genetic recombination and DNA repair, while the RuvA-RuvB complex plays an important role in the rescue of blocked DNA replication forks via replication fork reversal (RFR). RuvA specifically binds to HJ cruciform DNA, conferring on it an open structure. The RuvB hexamer acts as an ATP-dependent pump, pulling dsDNA into and through the RuvAB complex. HJ branch migration allows RuvC to scan DNA until it finds its consensus sequence, where it cleaves and resolves the cruciform DNA. The chain is Holliday junction branch migration complex subunit RuvA from Rickettsia typhi (strain ATCC VR-144 / Wilmington).